A 128-amino-acid chain; its full sequence is Z-ring associated protein G (128 aa).

A helical membrane pass occupies residues 7-27; sequence EIWFSISIAFLIGTLCGVLVM. The stretch at 37–75 forms a coiled coil; the sequence is QIQLKSELASAEAKIEEQKQQLERHFEQSANLLENLAED. The tract at residues 105–128 is disordered; that stretch reads NHANGDEDNQPRDYSDGSSGLLKS. Positions 107 to 119 are enriched in basic and acidic residues; sequence ANGDEDNQPRDYS.

Belongs to the ZapG family. In terms of assembly, homotetramer. In solution, is primarily monomeric but forms small amounts of stable tetramer and hexadecamer. The crystal structure of the cytosolic region shows a coiled-coil tetramer in the asymmetric unit that is very likely to be a physiologically relevant assembly of the protein.

The protein localises to the cell inner membrane. Functionally, involved in cell division, cell envelope biogenesis and cell shape maintenance. In Haemophilus ducreyi (strain 35000HP / ATCC 700724), this protein is Z-ring associated protein G.